The primary structure comprises 413 residues: 2,3-diketo-5-methylthiopentyl-1-phosphate enolase (413 aa).

The Proton acceptor role is filled by lysine 98. Residues lysine 147, 173–176 (KDDE), histidine 264, glycine 337, and 359–360 (GG) contribute to the substrate site. The Mg(2+) site is built by lysine 173, aspartate 175, and glutamate 176. Lysine 173 is modified (N6-carboxylysine).

This sequence belongs to the RuBisCO large chain family. Type IV subfamily. In terms of assembly, homodimer. Mg(2+) serves as cofactor.

It catalyses the reaction 5-methylsulfanyl-2,3-dioxopentyl phosphate = 2-hydroxy-5-methylsulfanyl-3-oxopent-1-enyl phosphate. It participates in amino-acid biosynthesis; L-methionine biosynthesis via salvage pathway; L-methionine from S-methyl-5-thio-alpha-D-ribose 1-phosphate: step 3/6. Its function is as follows. Catalyzes the enolization of 2,3-diketo-5-methylthiopentyl-1-phosphate (DK-MTP-1-P) into 2-hydroxy-3-keto-5-methylthiopentenyl-1-phosphate (HK-MTPenyl-1-P). In Geobacillus kaustophilus (strain HTA426), this protein is 2,3-diketo-5-methylthiopentyl-1-phosphate enolase (mtnW).